The sequence spans 359 residues: MNIYDQLQAVEDRYEELGELLSDPDVVSDTKRFMELSREEANSRETVAVYREYKQVVQNIADAQEMIKDASGDPELEEMAKEELKNSKVAKEEYEEKLRFLLLPKDPNDDKNIILEIRGAAGGDEAALFAGDLLNMYQKYAENQGWKFEVMEASANGVGGLKEVVAMVSGQSVYSKLKYESGAHRVQRVPVTESQGRVHTSTATVLVMPEVEEVEYEIDPKDLRVDIYHASGAGGQNVNKVATAVRIIHLPTNIKVEMQEERTQQKNRDKAMKIIRARVADHFAQIAQDEQDAERKSTVGTGDRSERIRTYNFPQNRVTDHRIGLTLQKLDSILSGKLDEVIDALILYDQTQKLEELNK.

Residue Gln236 is modified to N5-methylglutamine.

It belongs to the prokaryotic/mitochondrial release factor family. Post-translationally, methylated by PrmC. Methylation increases the termination efficiency of RF1.

It localises to the cytoplasm. Functionally, peptide chain release factor 1 directs the termination of translation in response to the peptide chain termination codons UAG and UAA. The protein is Peptide chain release factor 1 of Streptococcus mutans serotype c (strain ATCC 700610 / UA159).